The following is a 359-amino-acid chain: 5-amino-6-(D-ribitylamino)uracil--L-tyrosine 4-hydroxyphenyl transferase 1 (359 aa).

Residues 45–282 (VTYVVNANIN…VYAISRIFFK (238 aa)) enclose the Radical SAM core domain. [4Fe-4S] cluster contacts are provided by cysteine 59, cysteine 63, and cysteine 66.

The protein belongs to the radical SAM superfamily. CofH family. Consists of two subunits, CofG and CofH. [4Fe-4S] cluster serves as cofactor.

It catalyses the reaction 5-amino-6-(D-ribitylamino)uracil + L-tyrosine + S-adenosyl-L-methionine = 5-amino-5-(4-hydroxybenzyl)-6-(D-ribitylimino)-5,6-dihydrouracil + 2-iminoacetate + 5'-deoxyadenosine + L-methionine + H(+). The protein operates within cofactor biosynthesis; coenzyme F0 biosynthesis. In terms of biological role, catalyzes the radical-mediated synthesis of 5-amino-5-(4-hydroxybenzyl)-6-(D-ribitylimino)-5,6-dihydrouracil from 5-amino-6-(D-ribitylamino)uracil and L-tyrosine. In Methanococcus maripaludis (strain DSM 14266 / JCM 13030 / NBRC 101832 / S2 / LL), this protein is 5-amino-6-(D-ribitylamino)uracil--L-tyrosine 4-hydroxyphenyl transferase 1.